We begin with the raw amino-acid sequence, 54 residues long: ATP synthase protein 8 (54 aa).

Residues 13–32 (ITFTFVIITLMVYILSKYIL) traverse the membrane as a helical segment.

Belongs to the ATPase protein 8 family. As to quaternary structure, F-type ATPases have 2 components, CF(1) - the catalytic core - and CF(0) - the membrane proton channel.

Its subcellular location is the mitochondrion membrane. Its function is as follows. Mitochondrial membrane ATP synthase (F(1)F(0) ATP synthase or Complex V) produces ATP from ADP in the presence of a proton gradient across the membrane which is generated by electron transport complexes of the respiratory chain. F-type ATPases consist of two structural domains, F(1) - containing the extramembraneous catalytic core and F(0) - containing the membrane proton channel, linked together by a central stalk and a peripheral stalk. During catalysis, ATP synthesis in the catalytic domain of F(1) is coupled via a rotary mechanism of the central stalk subunits to proton translocation. Part of the complex F(0) domain. Minor subunit located with subunit a in the membrane. In Neurospora crassa (strain ATCC 24698 / 74-OR23-1A / CBS 708.71 / DSM 1257 / FGSC 987), this protein is ATP synthase protein 8 (atp-8).